Reading from the N-terminus, the 147-residue chain is Protein phosphatase 1 regulatory subunit 14A (147 aa).

Basic residues predominate over residues 1-11 (MAAQRLGKRVL). The disordered stretch occupies residues 1–37 (MAAQRLGKRVLSKLQSPSRARGPGGSPGGLQKRHARV). Serine 26 bears the Phosphoserine mark. An inhibitory region spans residues 35–120 (ARVTVKYDRR…LLAKLQGLHR (86 aa)). Threonine 38 bears the Phosphothreonine; by PKC mark. The tract at residues 118–147 (LHRQPGLRQPSPSHDGSLSPLQDRARTAHP) is disordered. Residues 127 to 137 (PSPSHDGSLSP) are compositionally biased toward polar residues. Phosphoserine occurs at positions 128, 134, and 136.

The protein belongs to the PP1 inhibitor family. As to expression, isoform 1 is detected in aorta and testis. Isoform 2 is detected in aorta.

The protein resides in the cytoplasm. In terms of biological role, inhibitor of PPP1CA. Has over 1000-fold higher inhibitory activity when phosphorylated, creating a molecular switch for regulating the phosphorylation status of PPP1CA substrates and smooth muscle contraction. The chain is Protein phosphatase 1 regulatory subunit 14A (PPP1R14A) from Homo sapiens (Human).